Reading from the N-terminus, the 172-residue chain is Adenine phosphoribosyltransferase (172 aa).

It belongs to the purine/pyrimidine phosphoribosyltransferase family. Homodimer.

It is found in the cytoplasm. The enzyme catalyses AMP + diphosphate = 5-phospho-alpha-D-ribose 1-diphosphate + adenine. It functions in the pathway purine metabolism; AMP biosynthesis via salvage pathway; AMP from adenine: step 1/1. Functionally, catalyzes a salvage reaction resulting in the formation of AMP, that is energically less costly than de novo synthesis. The sequence is that of Adenine phosphoribosyltransferase from Malacoplasma penetrans (strain HF-2) (Mycoplasma penetrans).